The primary structure comprises 785 residues: Endonuclease MutS2 (785 aa).

335–342 (GPNTGGKT) lines the ATP pocket. Positions 710–785 (LDLRGERYED…GNGVTIVEFK (76 aa)) constitute a Smr domain.

This sequence belongs to the DNA mismatch repair MutS family. MutS2 subfamily. Homodimer. Binds to stalled ribosomes, contacting rRNA.

In terms of biological role, endonuclease that is involved in the suppression of homologous recombination and thus may have a key role in the control of bacterial genetic diversity. Acts as a ribosome collision sensor, splitting the ribosome into its 2 subunits. Detects stalled/collided 70S ribosomes which it binds and splits by an ATP-hydrolysis driven conformational change. Acts upstream of the ribosome quality control system (RQC), a ribosome-associated complex that mediates the extraction of incompletely synthesized nascent chains from stalled ribosomes and their subsequent degradation. Probably generates substrates for RQC. The chain is Endonuclease MutS2 from Listeria monocytogenes serovar 1/2a (strain ATCC BAA-679 / EGD-e).